The chain runs to 643 residues: Threonine--tRNA ligase (643 aa).

The 62-residue stretch at 3-64 folds into the TGS domain; it reads DVVKITFPDG…EEDGAISIIT (62 aa). Residues 245–542 are catalytic; that stretch reads DHRKLGKELD…LIEEYKGAFP (298 aa). Zn(2+) is bound by residues C338, H389, and H519.

The protein belongs to the class-II aminoacyl-tRNA synthetase family. In terms of assembly, homodimer. It depends on Zn(2+) as a cofactor.

It localises to the cytoplasm. It carries out the reaction tRNA(Thr) + L-threonine + ATP = L-threonyl-tRNA(Thr) + AMP + diphosphate + H(+). In terms of biological role, catalyzes the attachment of threonine to tRNA(Thr) in a two-step reaction: L-threonine is first activated by ATP to form Thr-AMP and then transferred to the acceptor end of tRNA(Thr). Also edits incorrectly charged L-seryl-tRNA(Thr). The sequence is that of Threonine--tRNA ligase from Anoxybacillus flavithermus (strain DSM 21510 / WK1).